The sequence spans 835 residues: Beta-galactosidase (835 aa).

Positions M1–A22 are cleaved as a signal peptide. Residue E180 is the Proton donor of the active site. E249 (nucleophile) is an active-site residue. The SUEL-type lectin domain maps to R749–S835.

The protein belongs to the glycosyl hydrolase 35 family.

The enzyme catalyses Hydrolysis of terminal non-reducing beta-D-galactose residues in beta-D-galactosides.. In terms of biological role, involved in cell wall degradation. Degrades polysaccharides containing beta-(1--&gt;4)-linked galactans, acting as an exo-(1--&gt;4)-beta-D-galactanase. This is Beta-galactosidase from Solanum lycopersicum (Tomato).